Here is a 77-residue protein sequence, read N- to C-terminus: Acyl carrier protein (77 aa).

Positions 1-76 (MDREQRIKEI…DVINYLNEKL (76 aa)) constitute a Carrier domain. At serine 36 the chain carries O-(pantetheine 4'-phosphoryl)serine.

This sequence belongs to the acyl carrier protein (ACP) family. Post-translationally, 4'-phosphopantetheine is transferred from CoA to a specific serine of apo-ACP by AcpS. This modification is essential for activity because fatty acids are bound in thioester linkage to the sulfhydryl of the prosthetic group.

Its subcellular location is the cytoplasm. It participates in lipid metabolism; fatty acid biosynthesis. Functionally, carrier of the growing fatty acid chain in fatty acid biosynthesis. The polypeptide is Acyl carrier protein (Hydrogenobaculum sp. (strain Y04AAS1)).